A 304-amino-acid polypeptide reads, in one-letter code: D-alanine--D-alanine ligase (304 aa).

Residues 103 to 301 enclose the ATP-grasp domain; that stretch reads KQVWLALGLP…FDDLVWRILE (199 aa). Residue 132–187 participates in ATP binding; sequence VEMLGFPVIIKPAKEGSSVGVSRVFALEHLEEAVALAARYEGELLMEQLIEGDELT. Aspartate 254, glutamate 268, and asparagine 270 together coordinate Mg(2+).

This sequence belongs to the D-alanine--D-alanine ligase family. Requires Mg(2+) as cofactor. Mn(2+) serves as cofactor.

Its subcellular location is the cytoplasm. It carries out the reaction 2 D-alanine + ATP = D-alanyl-D-alanine + ADP + phosphate + H(+). It participates in cell wall biogenesis; peptidoglycan biosynthesis. Its function is as follows. Cell wall formation. The chain is D-alanine--D-alanine ligase from Xylella fastidiosa (strain Temecula1 / ATCC 700964).